The chain runs to 503 residues: Cytochrome P450 7A1 (503 aa).

Residues 4–24 (ISLIWGIAVVVSCCIWFIIGI) form a helical membrane-spanning segment. A heme-binding site is contributed by cysteine 444.

It belongs to the cytochrome P450 family. Heme serves as cofactor.

It is found in the endoplasmic reticulum membrane. The protein resides in the microsome membrane. The catalysed reaction is cholesterol + reduced [NADPH--hemoprotein reductase] + O2 = 7alpha-hydroxycholesterol + oxidized [NADPH--hemoprotein reductase] + H2O + H(+). It carries out the reaction 4beta-hydroxycholesterol + reduced [NADPH--hemoprotein reductase] + O2 = 4beta,7alpha-dihydroxycholesterol + oxidized [NADPH--hemoprotein reductase] + H2O + H(+). It catalyses the reaction lathosterol + reduced [NADPH--hemoprotein reductase] + O2 = 7alpha,8alpha-epoxy-5alpha-cholestan-3beta-ol + oxidized [NADPH--hemoprotein reductase] + H2O + H(+). The enzyme catalyses lathosterol + reduced [NADPH--hemoprotein reductase] + O2 = 5alpha-cholestan-7-oxo-3beta-ol + oxidized [NADPH--hemoprotein reductase] + H2O + H(+). The catalysed reaction is 7-dehydrocholesterol + reduced [NADPH--hemoprotein reductase] + O2 = 7-oxocholesterol + oxidized [NADPH--hemoprotein reductase] + H2O + H(+). It carries out the reaction (24S)-hydroxycholesterol + reduced [NADPH--hemoprotein reductase] + O2 = (24S)-7alpha-dihydroxycholesterol + oxidized [NADPH--hemoprotein reductase] + H2O + H(+). It catalyses the reaction (24R)-hydroxycholesterol + reduced [NADPH--hemoprotein reductase] + O2 = (24R)-7alpha-dihydroxycholesterol + oxidized [NADPH--hemoprotein reductase] + H2O + H(+). It functions in the pathway lipid metabolism; bile acid biosynthesis. Its pathway is steroid metabolism; cholesterol degradation. Its function is as follows. A cytochrome P450 monooxygenase involved in the metabolism of endogenous cholesterol and its oxygenated derivatives (oxysterols). Mechanistically, uses molecular oxygen inserting one oxygen atom into a substrate, and reducing the second into a water molecule, with two electrons provided by NADPH via cytochrome P450 reductase (CPR; NADPH-ferrihemoprotein reductase). Functions as a critical regulatory enzyme of bile acid biosynthesis and cholesterol homeostasis. Catalyzes the hydroxylation of carbon hydrogen bond at 7-alpha position of cholesterol, a rate-limiting step in cholesterol catabolism and bile acid biosynthesis. 7-alpha hydroxylates several oxysterols, including 4beta-hydroxycholesterol and 24-hydroxycholesterol. Catalyzes the oxidation of the 7,8 double bond of 7-dehydrocholesterol and lathosterol with direct and predominant formation of the 7-keto derivatives. The chain is Cytochrome P450 7A1 from Mus musculus (Mouse).